A 455-amino-acid chain; its full sequence is Exodeoxyribonuclease 7 large subunit (455 aa).

Belongs to the XseA family. As to quaternary structure, heterooligomer composed of large and small subunits.

The protein localises to the cytoplasm. The enzyme catalyses Exonucleolytic cleavage in either 5'- to 3'- or 3'- to 5'-direction to yield nucleoside 5'-phosphates.. Bidirectionally degrades single-stranded DNA into large acid-insoluble oligonucleotides, which are then degraded further into small acid-soluble oligonucleotides. The sequence is that of Exodeoxyribonuclease 7 large subunit from Koribacter versatilis (strain Ellin345).